Here is a 249-residue protein sequence, read N- to C-terminus: Hydantoin racemase (249 aa).

The protein belongs to the HyuE racemase family. As to quaternary structure, homohexamer.

The enzyme catalyses a D-5-monosubstituted hydantoin = a L-5-monosubstituted hydantoin. The catalysed reaction is D-5-[2-(methylsulfanyl)ethyl]hydantoin = L-5-[2-(methysulfanyl)ethyl]hydantoin. It catalyses the reaction D-5-benzylhydantoin = L-5-benzylhydantoin. It carries out the reaction D-5-isopropylhydantoin = L-5-isopropylhydantoin. The enzyme catalyses D-5-isobutylhydantoin = L-5-isobutylhydantoin. Strongly inhibited by Cu(2+) and Zn(2+). Slightly stimulated by the addition of Mn(2+) or Co(2+), but also by metal-chelating agents such as EDTA or EGTA, indicating that the enzyme is not a metalloenzyme. In terms of biological role, involved in the asymmetric conversion of racemic 5-substituted hydantoins to the corresponding L-amino acids. Catalyzes the racemization via enolization of D- and L-5-monosubstituted hydantoins. Is able to racemize 5-substituted hydantoins having aromatic or aliphatic substituents such as 5-(2-methylthioethyl)hydantoin, 5-isopropylhydantoin, 5-isobutylhydantoin and 5-benzylhydantoin. In Pseudomonas sp. (strain NS671), this protein is Hydantoin racemase.